Consider the following 1220-residue polypeptide: DNA polymerase catalytic subunit (1220 aa).

Disordered stretches follow at residues 21–43 (GKRP…RPPQ) and 641–691 (QADA…KPGV). Residues 646–660 (SETSELAMDSQSHAF) show a composition bias toward polar residues.

It belongs to the DNA polymerase type-B family. As to quaternary structure, forms a complex with the ssDNA-binding protein, the DNA polymerase processivity factor, and the alkaline exonuclease. Interacts with the helicase-primase complex composed of the primase, the helicase and the primase-associated factor; this interaction may coordinate leading and lagging strand DNA synthesis at the replication fork.

The protein localises to the host nucleus. The enzyme catalyses DNA(n) + a 2'-deoxyribonucleoside 5'-triphosphate = DNA(n+1) + diphosphate. It carries out the reaction Endonucleolytic cleavage to 5'-phosphomonoester.. Functionally, replicates viral genomic DNA. The replication complex is composed of six viral proteins: the DNA polymerase, processivity factor, primase, primase-associated factor, helicase, and ssDNA-binding protein. Additionally, the polymerase contains an intrinsic ribonuclease H (RNase H) activity that specifically degrades RNA/DNA heteroduplexes or duplex DNA substrates in the 5' to 3' direction. Therefore, it can catalyze the excision of the RNA primers that initiate the synthesis of Okazaki fragments at a replication fork during viral DNA replication. The sequence is that of DNA polymerase catalytic subunit from Equus caballus (Horse).